The sequence spans 215 residues: Urease accessory protein UreG (215 aa).

24 to 31 (GPVGSGKT) contributes to the GTP binding site.

The protein belongs to the SIMIBI class G3E GTPase family. UreG subfamily. Homodimer. UreD, UreF and UreG form a complex that acts as a GTP-hydrolysis-dependent molecular chaperone, activating the urease apoprotein by helping to assemble the nickel containing metallocenter of UreC. The UreE protein probably delivers the nickel.

Its subcellular location is the cytoplasm. Facilitates the functional incorporation of the urease nickel metallocenter. This process requires GTP hydrolysis, probably effectuated by UreG. This is Urease accessory protein UreG from Burkholderia ambifaria (strain ATCC BAA-244 / DSM 16087 / CCUG 44356 / LMG 19182 / AMMD) (Burkholderia cepacia (strain AMMD)).